The primary structure comprises 100 residues: MNTTQVILFAVVLVLTVTVGQADEDSAETSLLRKLEEAEASMFGQYLEESKNSPEQRCAGENVPCDKDRPGDCCSRYECLKPTGYGWWYASYYCYKKKSG.

The first 22 residues, 1–22 (MNTTQVILFAVVLVLTVTVGQA), serve as a signal peptide directing secretion. Residues 23–57 (DEDSAETSLLRKLEEAEASMFGQYLEESKNSPEQR) constitute a propeptide that is removed on maturation. Disulfide bonds link Cys58–Cys74, Cys65–Cys79, and Cys73–Cys94. Serine amide is present on Ser99.

This sequence belongs to the neurotoxin 14 (magi-1) family. 08 (Ltx-4) subfamily. Expressed by the venom duct.

Its subcellular location is the secreted. Inhibits 31.17% of Cav2.1/CACNA1A current at 1 uM concentration. In Acanthoscurria paulensis (Brazilian giant black tarantula spider), this protein is Omega toxin Ap2.